A 4083-amino-acid polypeptide reads, in one-letter code: Dynein heavy chain, cytoplasmic (4083 aa).

A stem region spans residues 1–1745 (MTDDQVAQAL…TIEQSCVSFC (1745 aa)). Coiled coils occupy residues 127–166 (DAVV…FIEV), 381–402 (INQW…MRKR), and 801–821 (KLDL…VDQA). AAA regions lie at residues 1746-1967 (YGFE…VLRN), 2026-2265 (SYLA…YKAD), 2373-2622 (SLES…WVRG), and 2716-2980 (TFAE…GNSQ). ATP contacts are provided by residues 1784–1791 (GPAGTGKT), 2064–2071 (GDAGTGKT), 2412–2419 (GPPGSGKT), and 2754–2761 (GPNYSGKT). A stalk region spans residues 2987 to 3294 (LTSLRRFQSL…RSIKLMESLT (308 aa)). Coiled-coil stretches lie at residues 3015–3085 (LEKL…NERR), 3223–3302 (LKEE…RWIK), and 3527–3607 (LEKE…VEDL). 2 AAA regions span residues 3364-3592 (MVNP…EIAK) and 3748-3952 (LKSL…FLDH).

This sequence belongs to the dynein heavy chain family. As to quaternary structure, consists of at least two heavy chains and a number of intermediate and light chains.

It localises to the cytoplasm. Its subcellular location is the cytoskeleton. Cytoplasmic dynein acts as a motor for the intracellular retrograde motility of vesicles and organelles along microtubules. Dynein has ATPase activity; the force-producing power stroke is thought to occur on release of ADP. Required to maintain uniform nuclear distribution in hyphae. May play an important role in the proper orientation of the mitotic spindle into the budding daughter cell yeast. Probably required for normal progression of the cell cycle. This chain is Dynein heavy chain, cytoplasmic (DYN1), found in Eremothecium gossypii (strain ATCC 10895 / CBS 109.51 / FGSC 9923 / NRRL Y-1056) (Yeast).